We begin with the raw amino-acid sequence, 1135 residues long: Ubiquitin carboxyl-terminal hydrolase 7 (1135 aa).

Positions 31–172 constitute an MATH domain; that stretch reads EGHLSLDIDC…NDTIKLRCRF (142 aa). Residues 193 to 503 form the USP domain; it reads IGLRNQGATC…SAYMLVYVRD (311 aa). Cysteine 202 acts as the Nucleophile in catalysis. Catalysis depends on histidine 442, which acts as the Proton acceptor.

The protein belongs to the peptidase C19 family.

Its subcellular location is the nucleus. The enzyme catalyses Thiol-dependent hydrolysis of ester, thioester, amide, peptide and isopeptide bonds formed by the C-terminal Gly of ubiquitin (a 76-residue protein attached to proteins as an intracellular targeting signal).. Functionally, hydrolase that deubiquitinates target proteins. May play a role in regulating the levels of endogenous siRNA biogenesis. This is Ubiquitin carboxyl-terminal hydrolase 7 from Caenorhabditis elegans.